The primary structure comprises 343 residues: Zinc finger CCCH domain-containing protein 39 (343 aa).

Residues Leu-114–Lys-147 are a coiled coil. 2 consecutive C3H1-type zinc fingers follow at residues Met-268 to Ala-296 and Arg-306 to Thr-334.

This is Zinc finger CCCH domain-containing protein 39 from Oryza sativa subsp. japonica (Rice).